The following is a 406-amino-acid chain: Trk system potassium uptake protein trkA homolog 1 (406 aa).

In terms of domain architecture, RCK N-terminal 1 spans 1–124 (MKAVIIGAGE…RAQVGVDLMI (124 aa)). NAD(+)-binding positions include 7–11 (GAGEV), Asp29, 70–71 (TG), and Arg101. Residues 144 to 225 (IDAEMFAEGK…MEDLESVFGS (82 aa)) enclose the RCK C-terminal domain. The RCK N-terminal 2 domain occupies 230 to 348 (RTRILLIGCG…FEMVGIDMAV (119 aa)). Position 232 to 262 (232 to 262 (RILLIGCGIVGMYLAKLIDKEENADLRIIEH)) interacts with NAD(+).

In terms of biological role, part of a potassium transport system. This is Trk system potassium uptake protein trkA homolog 1 (trkA1) from Methanosarcina mazei (Methanosarcina frisia).